Reading from the N-terminus, the 290-residue chain is Carbonic anhydrase-related protein (290 aa).

S5 bears the Phosphoserine mark. The 263-residue stretch at 27-289 (VEWGYEEGVE…LSDRVIRAAF (263 aa)) folds into the Alpha-carbonic anhydrase domain. H87 serves as the catalytic Proton donor/acceptor. Zn(2+) contacts are provided by H118 and H141.

Belongs to the alpha-carbonic anhydrase family.

Its function is as follows. Does not have a carbonic anhydrase catalytic activity. This chain is Carbonic anhydrase-related protein (Ca8), found in Rattus norvegicus (Rat).